The chain runs to 416 residues: Serine hydroxymethyltransferase (416 aa).

Residues Leu121 and 125-127 contribute to the (6S)-5,6,7,8-tetrahydrofolate site; that span reads GHL. The residue at position 229 (Lys229) is an N6-(pyridoxal phosphate)lysine.

It belongs to the SHMT family. As to quaternary structure, homodimer. It depends on pyridoxal 5'-phosphate as a cofactor.

The protein resides in the cytoplasm. The enzyme catalyses (6R)-5,10-methylene-5,6,7,8-tetrahydrofolate + glycine + H2O = (6S)-5,6,7,8-tetrahydrofolate + L-serine. The protein operates within one-carbon metabolism; tetrahydrofolate interconversion. It functions in the pathway amino-acid biosynthesis; glycine biosynthesis; glycine from L-serine: step 1/1. Its function is as follows. Catalyzes the reversible interconversion of serine and glycine with tetrahydrofolate (THF) serving as the one-carbon carrier. This reaction serves as the major source of one-carbon groups required for the biosynthesis of purines, thymidylate, methionine, and other important biomolecules. Also exhibits THF-independent aldolase activity toward beta-hydroxyamino acids, producing glycine and aldehydes, via a retro-aldol mechanism. The polypeptide is Serine hydroxymethyltransferase (Neisseria gonorrhoeae).